Consider the following 273-residue polypeptide: Large ribosomal subunit protein uL2cz/uL2cy (273 aa).

Disordered regions lie at residues 1 to 20 and 225 to 273; these read MAKHLYKTPIPSTRKGTIDR and PVDH…RRRK.

This sequence belongs to the universal ribosomal protein uL2 family. In terms of assembly, part of the 50S ribosomal subunit.

It localises to the plastid. Its subcellular location is the chloroplast. This Oryza nivara (Indian wild rice) protein is Large ribosomal subunit protein uL2cz/uL2cy (rpl2-A).